A 397-amino-acid polypeptide reads, in one-letter code: Succinyl-diaminopimelate desuccinylase (397 aa).

H73 provides a ligand contact to Zn(2+). The active site involves D75. Position 106 (D106) interacts with Zn(2+). The Proton acceptor role is filled by E140. 3 residues coordinate Zn(2+): E141, E169, and H366.

It belongs to the peptidase M20A family. DapE subfamily. Homodimer. Zn(2+) serves as cofactor. Requires Co(2+) as cofactor.

It carries out the reaction N-succinyl-(2S,6S)-2,6-diaminopimelate + H2O = (2S,6S)-2,6-diaminopimelate + succinate. Its pathway is amino-acid biosynthesis; L-lysine biosynthesis via DAP pathway; LL-2,6-diaminopimelate from (S)-tetrahydrodipicolinate (succinylase route): step 3/3. Its function is as follows. Catalyzes the hydrolysis of N-succinyl-L,L-diaminopimelic acid (SDAP), forming succinate and LL-2,6-diaminopimelate (DAP), an intermediate involved in the bacterial biosynthesis of lysine and meso-diaminopimelic acid, an essential component of bacterial cell walls. The sequence is that of Succinyl-diaminopimelate desuccinylase from Rhizobium meliloti (strain 1021) (Ensifer meliloti).